Here is a 160-residue protein sequence, read N- to C-terminus: 6,7-dimethyl-8-ribityllumazine synthase (160 aa).

5-amino-6-(D-ribitylamino)uracil contacts are provided by residues Phe23, 61 to 63, and 85 to 87; these read SFE and AVI. Residue 90-91 coordinates (2S)-2-hydroxy-3-oxobutyl phosphate; the sequence is DT. His93 serves as the catalytic Proton donor. Phe118 serves as a coordination point for 5-amino-6-(D-ribitylamino)uracil. A (2S)-2-hydroxy-3-oxobutyl phosphate-binding site is contributed by Arg132.

This sequence belongs to the DMRL synthase family.

It carries out the reaction (2S)-2-hydroxy-3-oxobutyl phosphate + 5-amino-6-(D-ribitylamino)uracil = 6,7-dimethyl-8-(1-D-ribityl)lumazine + phosphate + 2 H2O + H(+). Its pathway is cofactor biosynthesis; riboflavin biosynthesis; riboflavin from 2-hydroxy-3-oxobutyl phosphate and 5-amino-6-(D-ribitylamino)uracil: step 1/2. Catalyzes the formation of 6,7-dimethyl-8-ribityllumazine by condensation of 5-amino-6-(D-ribitylamino)uracil with 3,4-dihydroxy-2-butanone 4-phosphate. This is the penultimate step in the biosynthesis of riboflavin. In Synechococcus sp. (strain CC9605), this protein is 6,7-dimethyl-8-ribityllumazine synthase.